The sequence spans 157 residues: Ribonuclease H (157 aa).

The RNase H type-1 domain occupies 1–146 (MPDLFAYTDG…ADELARAGMA (146 aa)). Mg(2+) contacts are provided by D9, E52, D74, and D138.

Belongs to the RNase H family. In terms of assembly, monomer. Mg(2+) is required as a cofactor.

It is found in the cytoplasm. The catalysed reaction is Endonucleolytic cleavage to 5'-phosphomonoester.. Its function is as follows. Endonuclease that specifically degrades the RNA of RNA-DNA hybrids. The polypeptide is Ribonuclease H (Ruegeria sp. (strain TM1040) (Silicibacter sp.)).